We begin with the raw amino-acid sequence, 859 residues long: DNA mismatch repair protein MutS (859 aa).

Residue Gly614–Ser621 participates in ATP binding.

Belongs to the DNA mismatch repair MutS family.

In terms of biological role, this protein is involved in the repair of mismatches in DNA. It is possible that it carries out the mismatch recognition step. This protein has a weak ATPase activity. The sequence is that of DNA mismatch repair protein MutS from Histophilus somni (strain 2336) (Haemophilus somnus).